The sequence spans 509 residues: Maturase K (509 aa).

Belongs to the intron maturase 2 family. MatK subfamily.

The protein localises to the plastid. The protein resides in the chloroplast. Usually encoded in the trnK tRNA gene intron. Probably assists in splicing its own and other chloroplast group II introns. The protein is Maturase K of Chamaecyparis obtusa (Hinoki false-cypress).